Reading from the N-terminus, the 267-residue chain is Ribosomal RNA small subunit methyltransferase A (267 aa).

Residues Asn16, Leu18, Gly43, Glu64, Asp88, and Asn109 each contribute to the S-adenosyl-L-methionine site.

It belongs to the class I-like SAM-binding methyltransferase superfamily. rRNA adenine N(6)-methyltransferase family. RsmA subfamily.

The protein resides in the cytoplasm. It carries out the reaction adenosine(1518)/adenosine(1519) in 16S rRNA + 4 S-adenosyl-L-methionine = N(6)-dimethyladenosine(1518)/N(6)-dimethyladenosine(1519) in 16S rRNA + 4 S-adenosyl-L-homocysteine + 4 H(+). In terms of biological role, specifically dimethylates two adjacent adenosines (A1518 and A1519) in the loop of a conserved hairpin near the 3'-end of 16S rRNA in the 30S particle. May play a critical role in biogenesis of 30S subunits. This chain is Ribosomal RNA small subunit methyltransferase A, found in Acidithiobacillus ferrooxidans (strain ATCC 23270 / DSM 14882 / CIP 104768 / NCIMB 8455) (Ferrobacillus ferrooxidans (strain ATCC 23270)).